We begin with the raw amino-acid sequence, 168 residues long: Transcription antitermination protein NusB (168 aa).

This sequence belongs to the NusB family.

In terms of biological role, involved in transcription antitermination. Required for transcription of ribosomal RNA (rRNA) genes. Binds specifically to the boxA antiterminator sequence of the ribosomal RNA (rrn) operons. This Chlamydia trachomatis serovar D (strain ATCC VR-885 / DSM 19411 / UW-3/Cx) protein is Transcription antitermination protein NusB.